The sequence spans 132 residues: Small ribosomal subunit protein uS8 (132 aa).

This sequence belongs to the universal ribosomal protein uS8 family. In terms of assembly, part of the 30S ribosomal subunit. Contacts proteins S5 and S12.

Its function is as follows. One of the primary rRNA binding proteins, it binds directly to 16S rRNA central domain where it helps coordinate assembly of the platform of the 30S subunit. In Corynebacterium efficiens (strain DSM 44549 / YS-314 / AJ 12310 / JCM 11189 / NBRC 100395), this protein is Small ribosomal subunit protein uS8.